Consider the following 133-residue polypeptide: Global transcriptional regulator Spx (133 aa).

The cysteines at positions 10 and 13 are disulfide-linked.

It belongs to the ArsC family. Spx subfamily. As to quaternary structure, interacts with the C-terminal domain of the alpha subunit of the RNAP.

The protein localises to the cytoplasm. In terms of biological role, global transcriptional regulator that plays a key role in stress response and exerts either positive or negative regulation of genes. Acts by interacting with the C-terminal domain of the alpha subunit of the RNA polymerase (RNAP). This interaction can enhance binding of RNAP to the promoter region of target genes and stimulate their transcription, or block interaction of RNAP with activator. The chain is Global transcriptional regulator Spx from Streptococcus pneumoniae serotype 4 (strain ATCC BAA-334 / TIGR4).